The chain runs to 645 residues: 1,4-alpha-glucan branching enzyme GlgB (645 aa).

The active-site Nucleophile is the D309. E352 serves as the catalytic Proton donor. The interval 619–645 (VKTRKGSKKQDGSKTKVRSNVTSRGKR) is disordered. Over residues 636-645 (RSNVTSRGKR) the composition is skewed to polar residues.

This sequence belongs to the glycosyl hydrolase 13 family. GlgB subfamily. Monomer.

The catalysed reaction is Transfers a segment of a (1-&gt;4)-alpha-D-glucan chain to a primary hydroxy group in a similar glucan chain.. Its pathway is glycan biosynthesis; glycogen biosynthesis. Its function is as follows. Catalyzes the formation of the alpha-1,6-glucosidic linkages in glycogen by scission of a 1,4-alpha-linked oligosaccharide from growing alpha-1,4-glucan chains and the subsequent attachment of the oligosaccharide to the alpha-1,6 position. The chain is 1,4-alpha-glucan branching enzyme GlgB from Bacillus cereus (strain AH820).